Here is a 599-residue protein sequence, read N- to C-terminus: Sulfite reductase [NADPH] flavoprotein alpha-component (599 aa).

Positions Val64–Val202 constitute a Flavodoxin-like domain. FMN-binding positions include Ser70–Ala75, Ser117–Gly120, and Leu153–Cys162. Positions Asp234–Pro448 constitute an FAD-binding FR-type domain. FAD contacts are provided by residues Thr322, Ala356, Arg386–Ser389, Thr404–Gly406, Tyr410, and Gly419–Ser422. NADP(+) contacts are provided by residues Ser519 to Arg520, Lys525 to Gln529, and Asp561. Tyr599 provides a ligand contact to FAD.

The protein belongs to the NADPH-dependent sulphite reductase flavoprotein subunit CysJ family. In the N-terminal section; belongs to the flavodoxin family. It in the C-terminal section; belongs to the flavoprotein pyridine nucleotide cytochrome reductase family. In terms of assembly, alpha(8)-beta(8). The alpha component is a flavoprotein, the beta component is a hemoprotein. It depends on FAD as a cofactor. Requires FMN as cofactor.

The enzyme catalyses hydrogen sulfide + 3 NADP(+) + 3 H2O = sulfite + 3 NADPH + 4 H(+). The protein operates within sulfur metabolism; hydrogen sulfide biosynthesis; hydrogen sulfide from sulfite (NADPH route): step 1/1. In terms of biological role, component of the sulfite reductase complex that catalyzes the 6-electron reduction of sulfite to sulfide. This is one of several activities required for the biosynthesis of L-cysteine from sulfate. The flavoprotein component catalyzes the electron flow from NADPH -&gt; FAD -&gt; FMN to the hemoprotein component. In Salmonella typhimurium (strain LT2 / SGSC1412 / ATCC 700720), this protein is Sulfite reductase [NADPH] flavoprotein alpha-component.